Here is a 72-residue protein sequence, read N- to C-terminus: MVHVYKGLFLECDPPTKQFVEYISKQEHFEVIVLDETHLFLQGGDEKVINSIQRRIDDLQNQNTYSVFDKDQ.

This sequence belongs to the TFB5 family. In terms of assembly, component of the 7-subunit TFIIH core complex composed of XPB/repB, XPD/repD, gtf2h1, gtf2h2, gtf2h3, gtf2h4 and gtf2h5, which is active in NER. The core complex associates with the 3-subunit CDK-activating kinase (CAK) module composed of cycH/cyclin H, cdk7 and mnat1 to form the 10-subunit holoenzyme (holo-TFIIH) active in transcription.

The protein resides in the nucleus. Functionally, component of the general transcription and DNA repair factor IIH (TFIIH) core complex, which is involved in general and transcription-coupled nucleotide excision repair (NER) of damaged DNA and, when complexed to CAK, in RNA transcription by RNA polymerase II. In NER, TFIIH acts by opening DNA around the lesion to allow the excision of the damaged oligonucleotide and its replacement by a new DNA fragment. In transcription, TFIIH has an essential role in transcription initiation. When the pre-initiation complex (PIC) has been established, TFIIH is required for promoter opening and promoter escape. Phosphorylation of the C-terminal tail (CTD) of the largest subunit of RNA polymerase II by the kinase module CAK controls the initiation of transcription. This chain is General transcription factor IIH subunit 5 (gtf2h5), found in Dictyostelium discoideum (Social amoeba).